Reading from the N-terminus, the 298-residue chain is HTH-type transcriptional regulator ArgP (298 aa).

The HTH lysR-type domain maps to 4–60 (LDYKWIEALDAVVYQGSFERAAEHLFVSQSAISQRIKQLEKFLAQPVLIREQPPKPT). The segment at residues 21–40 (FERAAEHLFVSQSAISQRIK) is a DNA-binding region (H-T-H motif).

Belongs to the LysR transcriptional regulatory family. In terms of assembly, homodimer.

Functionally, controls the transcription of genes involved in arginine and lysine metabolism. This Vibrio parahaemolyticus serotype O3:K6 (strain RIMD 2210633) protein is HTH-type transcriptional regulator ArgP.